We begin with the raw amino-acid sequence, 167 residues long: Transmembrane protein 229B (167 aa).

Over 1–14 the chain is Cytoplasmic; the sequence is MAAAEPLTAFSRWY. The chain crosses the membrane as a helical span at residues 15–35; it reads LYAIHGYFCEVMFTAAWEFVV. Residues 36 to 40 lie on the Extracellular side of the membrane; it reads NFNWK. A helical transmembrane segment spans residues 41-61; the sequence is FPGVTSVWALFIYGTSILIVE. Residues 62-72 lie on the Cytoplasmic side of the membrane; sequence KMYLYLKDKCH. A helical transmembrane segment spans residues 73–93; that stretch reads ILVRCFIYTLWTYLWEFTTGL. Topologically, residues 94–109 are extracellular; it reads ILRQFNACPWDYSQFD. Residues 110–130 form a helical membrane-spanning segment; sequence FDFMGLITLEYAIPWFCASFI. The Cytoplasmic segment spans residues 131–167; that stretch reads MEQLVIRNTLRLRFDETAEPGAPTVPVALANGHVKTD.

This sequence belongs to the TMEM229 family.

It localises to the membrane. The chain is Transmembrane protein 229B (TMEM229B) from Gallus gallus (Chicken).